The primary structure comprises 133 residues: UPF0102 protein CYA_0680 (133 aa).

Belongs to the UPF0102 family.

The sequence is that of UPF0102 protein CYA_0680 from Synechococcus sp. (strain JA-3-3Ab) (Cyanobacteria bacterium Yellowstone A-Prime).